The following is a 281-amino-acid chain: sn-glycerol-3-phosphate transport system permease protein UgpE (281 aa).

6 helical membrane passes run leucine 16–leucine 36, phenylalanine 85–phenylalanine 105, phenylalanine 113–valine 133, leucine 142–phenylalanine 162, alanine 202–isoleucine 222, and tryptophan 247–alanine 267. Positions methionine 77–methionine 268 constitute an ABC transmembrane type-1 domain.

The protein belongs to the binding-protein-dependent transport system permease family. UgpAE subfamily. As to quaternary structure, the complex is composed of two ATP-binding proteins (UgpC), two transmembrane proteins (UgpA and UgpE) and a solute-binding protein (UgpB).

The protein localises to the cell inner membrane. Functionally, part of the ABC transporter complex UgpBAEC involved in sn-glycerol-3-phosphate (G3P) import. Probably responsible for the translocation of the substrate across the membrane. In Salmonella choleraesuis (strain SC-B67), this protein is sn-glycerol-3-phosphate transport system permease protein UgpE (ugpE).